We begin with the raw amino-acid sequence, 65 residues long: DNA-directed RNA polymerase subunit Rpo10 (65 aa).

The Zn(2+) site is built by C7, C10, C44, and C45.

This sequence belongs to the archaeal Rpo10/eukaryotic RPB10 RNA polymerase subunit family. As to quaternary structure, part of the RNA polymerase complex. Requires Zn(2+) as cofactor.

Its subcellular location is the cytoplasm. It carries out the reaction RNA(n) + a ribonucleoside 5'-triphosphate = RNA(n+1) + diphosphate. In terms of biological role, DNA-dependent RNA polymerase (RNAP) catalyzes the transcription of DNA into RNA using the four ribonucleoside triphosphates as substrates. The polypeptide is DNA-directed RNA polymerase subunit Rpo10 (Pyrococcus furiosus (strain ATCC 43587 / DSM 3638 / JCM 8422 / Vc1)).